The primary structure comprises 394 residues: Carbamoyl phosphate synthase small chain (394 aa).

The interval 1–188 is CPSase; sequence MIRKERAILA…PLPYAFPTLR (188 aa). L-glutamine-binding residues include Ser-49, Gly-240, and Gly-242. Positions 192–379 constitute a Glutamine amidotransferase type-1 domain; sequence RVVLMDFGIK…IEEIDAFEGA (188 aa). The active-site Nucleophile is Cys-267. Positions 268, 271, 309, 311, and 312 each coordinate L-glutamine. Catalysis depends on residues His-352 and Glu-354.

The protein belongs to the CarA family. In terms of assembly, composed of two chains; the small (or glutamine) chain promotes the hydrolysis of glutamine to ammonia, which is used by the large (or ammonia) chain to synthesize carbamoyl phosphate. Tetramer of heterodimers (alpha,beta)4.

It catalyses the reaction hydrogencarbonate + L-glutamine + 2 ATP + H2O = carbamoyl phosphate + L-glutamate + 2 ADP + phosphate + 2 H(+). The catalysed reaction is L-glutamine + H2O = L-glutamate + NH4(+). It participates in amino-acid biosynthesis; L-arginine biosynthesis; carbamoyl phosphate from bicarbonate: step 1/1. Its pathway is pyrimidine metabolism; UMP biosynthesis via de novo pathway; (S)-dihydroorotate from bicarbonate: step 1/3. Small subunit of the glutamine-dependent carbamoyl phosphate synthetase (CPSase). CPSase catalyzes the formation of carbamoyl phosphate from the ammonia moiety of glutamine, carbonate, and phosphate donated by ATP, constituting the first step of 2 biosynthetic pathways, one leading to arginine and/or urea and the other to pyrimidine nucleotides. The small subunit (glutamine amidotransferase) binds and cleaves glutamine to supply the large subunit with the substrate ammonia. This is Carbamoyl phosphate synthase small chain from Deinococcus geothermalis (strain DSM 11300 / CIP 105573 / AG-3a).